Here is a 514-residue protein sequence, read N- to C-terminus: Histidine ammonia-lyase (514 aa).

The segment at residues 143–145 (CSG) is a cross-link (5-imidazolinone (Cys-Gly)). A 2,3-didehydroalanine (Ser) modification is found at Ser144.

It belongs to the PAL/histidase family. Post-translationally, contains an active site 4-methylidene-imidazol-5-one (MIO), which is formed autocatalytically by cyclization and dehydration of residues Cys-Ser-Gly.

It localises to the cytoplasm. The enzyme catalyses L-histidine = trans-urocanate + NH4(+). It functions in the pathway amino-acid degradation; L-histidine degradation into L-glutamate; N-formimidoyl-L-glutamate from L-histidine: step 1/3. In Streptomyces griseus, this protein is Histidine ammonia-lyase (hutH).